The following is a 202-amino-acid chain: Josephin-1 (202 aa).

Residue serine 15 is modified to Phosphoserine. One can recognise a Josephin domain in the interval 23 to 202 (PPQIYHEKQR…EAHQSWRTDV (180 aa)). Catalysis depends on cysteine 36, which acts as the Nucleophile. Histidine 139 functions as the Proton acceptor in the catalytic mechanism.

Interacts with beta-actin/ACTB. Post-translationally, monoubiquitinated. Ubiquitination activates deubiquitination activity in vitro.

Its subcellular location is the cell membrane. It localises to the cytoplasm. It carries out the reaction Thiol-dependent hydrolysis of ester, thioester, amide, peptide and isopeptide bonds formed by the C-terminal Gly of ubiquitin (a 76-residue protein attached to proteins as an intracellular targeting signal).. Deubiquitinates monoubiquitinated probes (in vitro). When ubiquitinated, cleaves 'Lys-63'-linked and 'Lys-48'-linked poly-ubiquitin chains (in vitro), hence may act as a deubiquitinating enzyme. May increase macropinocytosis and suppress clathrin- and caveolae-mediated endocytosis. May enhance membrane dynamics and cell motility independently of its catalytic activity. The sequence is that of Josephin-1 (JOSD1) from Pongo abelii (Sumatran orangutan).